The following is a 766-amino-acid chain: 1,4-alpha-glucan branching enzyme GlgB (766 aa).

The Nucleophile role is filled by Asp-431. Glu-484 functions as the Proton donor in the catalytic mechanism.

Belongs to the glycosyl hydrolase 13 family. GlgB subfamily. As to quaternary structure, monomer.

It catalyses the reaction Transfers a segment of a (1-&gt;4)-alpha-D-glucan chain to a primary hydroxy group in a similar glucan chain.. It participates in glycan biosynthesis; glycogen biosynthesis. In terms of biological role, catalyzes the formation of the alpha-1,6-glucosidic linkages in glycogen by scission of a 1,4-alpha-linked oligosaccharide from growing alpha-1,4-glucan chains and the subsequent attachment of the oligosaccharide to the alpha-1,6 position. The protein is 1,4-alpha-glucan branching enzyme GlgB of Thermosynechococcus vestitus (strain NIES-2133 / IAM M-273 / BP-1).